Reading from the N-terminus, the 485-residue chain is Protein nucleotidyltransferase YdiU (485 aa).

The ATP site is built by Gly-90, Gly-92, Arg-93, Lys-113, Asp-125, Gly-126, Arg-176, and Arg-183. Asp-252 acts as the Proton acceptor in catalysis. Mg(2+) is bound by residues Asn-253 and Asp-262. Asp-262 contacts ATP.

This sequence belongs to the SELO family. Requires Mg(2+) as cofactor. Mn(2+) is required as a cofactor.

The catalysed reaction is L-seryl-[protein] + ATP = 3-O-(5'-adenylyl)-L-seryl-[protein] + diphosphate. It catalyses the reaction L-threonyl-[protein] + ATP = 3-O-(5'-adenylyl)-L-threonyl-[protein] + diphosphate. The enzyme catalyses L-tyrosyl-[protein] + ATP = O-(5'-adenylyl)-L-tyrosyl-[protein] + diphosphate. It carries out the reaction L-histidyl-[protein] + UTP = N(tele)-(5'-uridylyl)-L-histidyl-[protein] + diphosphate. The catalysed reaction is L-seryl-[protein] + UTP = O-(5'-uridylyl)-L-seryl-[protein] + diphosphate. It catalyses the reaction L-tyrosyl-[protein] + UTP = O-(5'-uridylyl)-L-tyrosyl-[protein] + diphosphate. Its function is as follows. Nucleotidyltransferase involved in the post-translational modification of proteins. It can catalyze the addition of adenosine monophosphate (AMP) or uridine monophosphate (UMP) to a protein, resulting in modifications known as AMPylation and UMPylation. The sequence is that of Protein nucleotidyltransferase YdiU from Aliivibrio fischeri (strain ATCC 700601 / ES114) (Vibrio fischeri).